Consider the following 100-residue polypeptide: DNA-binding protein HU (100 aa).

It belongs to the bacterial histone-like protein family.

Functionally, histone-like DNA-binding protein which is capable of wrapping DNA to stabilize it, and thus to prevent its denaturation under extreme environmental conditions. This Synechocystis sp. (strain ATCC 27184 / PCC 6803 / Kazusa) protein is DNA-binding protein HU (hup).